The primary structure comprises 537 residues: Endoprotease aex-5 (537 aa).

An N-terminal signal peptide occupies residues 1–17 (MKLIFLLLLFGVSPIVC). Residues 18 to 99 (QDFEDGVFLA…KLQGFRRYKR (82 aa)) constitute a propeptide that is removed on maturation. A Peptidase S8 domain is found at 111-413 (VWNLTPSLYI…FGLLNAQKLV (303 aa)). A glycan (N-linked (GlcNAc...) asparagine) is linked at Asn129. Catalysis depends on charge relay system residues Asp139 and His178. Cys286 and Cys316 are oxidised to a cystine. Ser346 functions as the Charge relay system in the catalytic mechanism. N-linked (GlcNAc...) asparagine glycosylation occurs at Asn380. A P/Homo B domain is found at 407 to 537 (LNAQKLVVMA…KMFKVVGTMS (131 aa)).

Belongs to the peptidase S8 family. Furin subfamily.

The protein localises to the secreted. In terms of biological role, probable serine endoprotease which cleaves preproteins at paired basic amino acids. May process FMRFamide-like (flp) and neuropeptide-like protein (nlp) neuropeptides. In muscles, involved in neuronal retrograde signaling by regulating presynaptic activity and localization of synaptic vesicle fusion protein unc-13 at the neuromuscular junction (NMJ). Acts in the intestine to regulate anterior body muscle contractions (aBOC) and the expulsion steps during the defecation motor program (DMP). Probably by regulating DMP, required for fatty acid uptake by intestinal cells and therefore regulates the levels of triglycerides in the intestine. Plays a role in locomotion. The protein is Endoprotease aex-5 of Caenorhabditis elegans.